We begin with the raw amino-acid sequence, 394 residues long: Large ribosomal subunit protein mL44 (394 aa).

The N-terminal 21 residues, 1–21, are a transit peptide targeting the mitochondrion; sequence MFRHVAQNLGSRNTSIQSYRL.

The protein belongs to the ribonuclease III family. Mitochondrion-specific ribosomal protein mL44 subfamily. In terms of assembly, component of the mitochondrial large ribosomal subunit (mt-LSU).

The protein localises to the mitochondrion. Component of the mitochondrial ribosome. May have a function in the assembly/stability of nascent mitochondrial polypeptides exiting the ribosome. In Caenorhabditis elegans, this protein is Large ribosomal subunit protein mL44.